Reading from the N-terminus, the 323-residue chain is ATP synthase gamma chain (323 aa).

This sequence belongs to the ATPase gamma chain family. F-type ATPases have 2 components, CF(1) - the catalytic core - and CF(0) - the membrane proton channel. CF(1) has five subunits: alpha(3), beta(3), gamma(1), delta(1), epsilon(1). CF(0) has three main subunits: a, b and c.

Its subcellular location is the cell membrane. Its function is as follows. Produces ATP from ADP in the presence of a proton gradient across the membrane. The gamma chain is believed to be important in regulating ATPase activity and the flow of protons through the CF(0) complex. This Nocardia farcinica (strain IFM 10152) protein is ATP synthase gamma chain.